A 387-amino-acid chain; its full sequence is [LysW]-aminoadipate semialdehyde/glutamate semialdehyde transaminase (387 aa).

Pyridoxal 5'-phosphate-binding positions include 96–97 (GT) and Phe-123. Position 126 (Arg-126) interacts with substrate. Residue 207-210 (DEIQ) participates in pyridoxal 5'-phosphate binding. Lys-236 carries the post-translational modification N6-(pyridoxal phosphate)lysine. Residue Ser-264 coordinates substrate. Thr-265 lines the pyridoxal 5'-phosphate pocket.

This sequence belongs to the class-III pyridoxal-phosphate-dependent aminotransferase family. LysJ subfamily. In terms of assembly, homodimer. The cofactor is pyridoxal 5'-phosphate.

It is found in the cytoplasm. The enzyme catalyses [amino-group carrier protein]-C-terminal-gamma-(L-lysyl)-L-glutamate + 2-oxoglutarate = [amino-group carrier protein]-C-terminal-N-(1-carboxy-5-oxopentan-1-yl)-L-glutamine + L-glutamate. It carries out the reaction [amino-group carrier protein]-C-terminal-gamma-(L-ornithyl)-L-glutamate + 2-oxoglutarate = [amino-group carrier protein]-C-terminal-gamma-(L-glutamyl-5-semialdehyde)-L-glutamate + L-glutamate. Its pathway is amino-acid biosynthesis; L-lysine biosynthesis via AAA pathway; L-lysine from L-alpha-aminoadipate (Thermus route): step 4/5. It functions in the pathway amino-acid biosynthesis; L-arginine biosynthesis. Its function is as follows. Involved in both the arginine and lysine biosynthetic pathways. The protein is [LysW]-aminoadipate semialdehyde/glutamate semialdehyde transaminase of Sulfolobus acidocaldarius (strain ATCC 33909 / DSM 639 / JCM 8929 / NBRC 15157 / NCIMB 11770).